The primary structure comprises 553 residues: uncharacterized protein (553 aa).

The N-terminal stretch at 1–28 (MRYARHASRYSLFTLAVSAALLPGAGWA) is a signal peptide.

This is an uncharacterized protein from Pseudomonas aeruginosa (strain ATCC 15692 / DSM 22644 / CIP 104116 / JCM 14847 / LMG 12228 / 1C / PRS 101 / PAO1).